The following is a 340-amino-acid chain: Probable HTH-type transcriptional regulator EndR (340 aa).

Residues 1–58 (MVTTMKEVAERAGVSKSTVSQFLQKRYNYMSENTKKKIEQAIEDLSYIPNEVARSLKQ) enclose the HTH lacI-type domain. A DNA-binding region (H-T-H motif) is located at residues 5–24 (MKEVAERAGVSKSTVSQFLQ).

Functionally, putative repressor of the endoglucanase operon. This is Probable HTH-type transcriptional regulator EndR (endR) from Paenibacillus polymyxa (Bacillus polymyxa).